Reading from the N-terminus, the 447-residue chain is Blue-light photoreceptor PHR2 (447 aa).

Over residues Met-1–Thr-14 the composition is skewed to polar residues. The tract at residues Met-1 to Gln-20 is disordered. The region spanning Arg-115–Leu-249 is the Photolyase/cryptochrome alpha/beta domain.

This sequence belongs to the DNA photolyase class-1 family. Requires FAD as cofactor.

The polypeptide is Blue-light photoreceptor PHR2 (PHR2) (Arabidopsis thaliana (Mouse-ear cress)).